A 670-amino-acid chain; its full sequence is MSYLSVGDEVLIRGELGIVRFAGSTDFESGIWLGVELLNGKGKNDGSVKGKRYFSCEKGKGIFVRACSSNVMKRPSVVKSRKKGSENISNFMEKTKAIKQKSRREPSKFERSLARPLCITPIDSSTPTKTATFYTSSTTENLDELNFSTEELSSFDTTLLNSDTSKLSGLDDSSFMEEEFVWQVDNVLQECEKKFTPHSKGSYLKENLKSELRKGRLDELMCENTALKEKIDKLNKELEKVEPQLTFLRSKNSIEKPRNFRREKFLKKFLAMQKEIKYLRKRKLQIRKIPNYKYSDRSLNSKTPKSQDNWTTQVTPSSLLGVSEVSKVLQLKQVQVDITELVKIPKNPFSEKLTISNVNRYLNIVPGSLDLQFSLTNENFVHWNSTVYQELLNLKSNNSSVDGVKTRRQLLEENALLSHKVLKLTEEIQDLETLNQLNTEIEARQSEKLNEVQEETQRLSQLLISSQPALTEVKHLKLCLSDSQEELLQLNAKLEKANIVIDELNSAKLKLSKQVEEESSMKDDLTEMNQRLKEQIESYENEVNSEITSRTLKEFETLKTQYEKNLCNLREQLKTARMKLADKYPQGDNTSENIDWLKHSLRDSNTENSIPSPLTFACKEIRKLVADIKPVSVEKQLALNWKKDIERPSFHHNQQLFNYCQLTDILSKKC.

The CAP-Gly domain occupies 23 to 65 (GSTDFESGIWLGVELLNGKGKNDGSVKGKRYFSCEKGKGIFVR). Coiled-coil stretches lie at residues 209–254 (KSEL…KNSI) and 404–582 (VKTR…KLAD). Residue S460 is modified to Phosphoserine. T606 is subject to Phosphothreonine.

It is found in the cytoplasm. The protein resides in the cytoskeleton. It localises to the spindle. Binds to nuclear microtubules with the effect of either modifying their structure or function. This then promotes meiotic nuclear division. This Schizosaccharomyces pombe (strain 972 / ATCC 24843) (Fission yeast) protein is Microtubule-associated protein ssm4 (ssm4).